The primary structure comprises 120 residues: Insulin-like peptide 3 (120 aa).

A signal peptide spans 1 to 29; sequence MGIEMRCQDRRILLPSLLLLILMIGGVQA. Disulfide bonds link Cys-34–Cys-101, Cys-46–Cys-114, and Cys-100–Cys-105. Positions 51–89 are cleaved as a propeptide — connecting peptide; the sequence is NAMTKRTLDPVNFNQIDGFEDRSLLERLLSDSSVQMLKT.

Belongs to the insulin family. In terms of assembly, heterodimer of a B chain and an A chain linked by two disulfide bonds. As to expression, expressed at a high level in seven cells of each larval brain hemisphere that may correspond to neurosecretory cells.

Its subcellular location is the secreted. Possible ligand of InR/insulin-like receptor. The polypeptide is Insulin-like peptide 3 (Drosophila melanogaster (Fruit fly)).